We begin with the raw amino-acid sequence, 223 residues long: Phosphoribosylformylglycinamidine synthase subunit PurQ (223 aa).

Residues 4–223 (RIGVITFPGT…FQSVLSTLVS (220 aa)) form the Glutamine amidotransferase type-1 domain. Catalysis depends on cysteine 87, which acts as the Nucleophile. Catalysis depends on residues histidine 195 and glutamate 197.

Part of the FGAM synthase complex composed of 1 PurL, 1 PurQ and 2 PurS subunits.

It localises to the cytoplasm. It catalyses the reaction N(2)-formyl-N(1)-(5-phospho-beta-D-ribosyl)glycinamide + L-glutamine + ATP + H2O = 2-formamido-N(1)-(5-O-phospho-beta-D-ribosyl)acetamidine + L-glutamate + ADP + phosphate + H(+). The catalysed reaction is L-glutamine + H2O = L-glutamate + NH4(+). It functions in the pathway purine metabolism; IMP biosynthesis via de novo pathway; 5-amino-1-(5-phospho-D-ribosyl)imidazole from N(2)-formyl-N(1)-(5-phospho-D-ribosyl)glycinamide: step 1/2. Its function is as follows. Part of the phosphoribosylformylglycinamidine synthase complex involved in the purines biosynthetic pathway. Catalyzes the ATP-dependent conversion of formylglycinamide ribonucleotide (FGAR) and glutamine to yield formylglycinamidine ribonucleotide (FGAM) and glutamate. The FGAM synthase complex is composed of three subunits. PurQ produces an ammonia molecule by converting glutamine to glutamate. PurL transfers the ammonia molecule to FGAR to form FGAM in an ATP-dependent manner. PurS interacts with PurQ and PurL and is thought to assist in the transfer of the ammonia molecule from PurQ to PurL. In Corynebacterium jeikeium (strain K411), this protein is Phosphoribosylformylglycinamidine synthase subunit PurQ.